A 483-amino-acid chain; its full sequence is Dihydrolipoyllysine-residue acetyltransferase component of pyruvate dehydrogenase complex, mitochondrial (483 aa).

Residues 1–28 (MLSANMLRRMHHGVAVTRMLLVSNGKVQ) constitute a mitochondrion transit peptide. In terms of domain architecture, Lipoyl-binding spans 53-129 (HTVINMPALS…PVGKPLAVTV (77 aa)). Lys94 carries the N6-lipoyllysine modification. Disordered regions lie at residues 143–187 (IEDS…DRVF) and 234–254 (EAAA…APGD). A compositionally biased stretch (basic and acidic residues) spans 146-160 (SSAKEPSAKSGEEKS). The segment covering 161–178 (APSSEKQSKETSSPSNVS) has biased composition (polar residues). The Peripheral subunit-binding (PSBD) domain maps to 187–224 (FASPLARKLAEEKDLDLSQIRGSGPNGRIIKVDIENFK). Over residues 235–252 (AAAKATTPAASAADAAAP) the composition is skewed to low complexity. Active-site residues include His456 and Asp460.

The protein belongs to the 2-oxoacid dehydrogenase family. (R)-lipoate serves as cofactor.

Its subcellular location is the mitochondrion matrix. It carries out the reaction N(6)-[(R)-dihydrolipoyl]-L-lysyl-[protein] + acetyl-CoA = N(6)-[(R)-S(8)-acetyldihydrolipoyl]-L-lysyl-[protein] + CoA. The pyruvate dehydrogenase complex catalyzes the overall conversion of pyruvate to acetyl-CoA and CO(2). It contains multiple copies of three enzymatic components: pyruvate dehydrogenase (E1), dihydrolipoamide acetyltransferase (E2) and lipoamide dehydrogenase (E3). The protein is Dihydrolipoyllysine-residue acetyltransferase component of pyruvate dehydrogenase complex, mitochondrial of Schizosaccharomyces pombe (strain 972 / ATCC 24843) (Fission yeast).